The primary structure comprises 363 residues: MEIGVFIPIGNNGWLLSENAPQYKPSFELNKEITLKAEKYGFDFVLSMIKLRGFGGKTEFWDHNLESFTLMSGLAAVTTRIKLFATAATLVMPPAIVARMASTIDSISNGRFGLNLVTGWQRPEYSQMGMWPGDEYFAKRYDYLGEYATVLRDLWETGKSDLKGEFFQMDDCRLSPRPQADMKVICAGSSTAGMEFSAQYADYNFCFGVGVNTPKAFAPAAERLQVATAKTGRDVSSFVLFMVIADETDEAARAKWESYKDGADQEAIAWLGVQGAADTKSGSDTNIRQMADSVSAVNINMGTLVGSYETIAKLLDEVPTVPGTGGVLLTFDDFVKGVEDFGTKIQPLMKCREHIKPMLEAAE.

FMN is bound by residues 49–50, N115, E124, 140–141, and S190; these read IK and RY.

The protein belongs to the NtaA/SnaA/DszA monooxygenase family. RutA subfamily.

It carries out the reaction uracil + FMNH2 + NADH + O2 = (Z)-3-ureidoacrylate + FMN + NAD(+) + H2O + H(+). The enzyme catalyses thymine + FMNH2 + NADH + O2 = (Z)-2-methylureidoacrylate + FMN + NAD(+) + H2O + H(+). In terms of biological role, catalyzes the pyrimidine ring opening between N-3 and C-4 by an unusual flavin hydroperoxide-catalyzed mechanism, adding oxygen atoms in the process to yield ureidoacrylate peracid, that immediately reacts with FMN forming ureidoacrylate and FMN-N(5)-oxide. The FMN-N(5)-oxide reacts spontaneously with NADH to produce FMN. Requires the flavin reductase RutF to regenerate FMN in vivo. The polypeptide is Pyrimidine monooxygenase RutA (Rhizobium rhizogenes (strain K84 / ATCC BAA-868) (Agrobacterium radiobacter)).